The following is a 416-amino-acid chain: N-acetylmuramoyl-L-alanine amidase AmiC (416 aa).

An N-terminal signal peptide occupies residues 1–26 (MIKLTRRQIIRRTAGTLFALSPIASA). The interval 166 to 191 (RGSPEADLAQNTTPQPGRGRNGRRPV) is disordered. The 214-residue stretch at 192-405 (IMLDPGHGGE…CAQSIASGVQ (214 aa)) folds into the MurNAc-LAA domain.

It belongs to the N-acetylmuramoyl-L-alanine amidase 3 family.

It localises to the periplasm. The enzyme catalyses Hydrolyzes the link between N-acetylmuramoyl residues and L-amino acid residues in certain cell-wall glycopeptides.. In terms of biological role, cell-wall hydrolase involved in septum cleavage during cell division. This Neisseria meningitidis serogroup B (strain ATCC BAA-335 / MC58) protein is N-acetylmuramoyl-L-alanine amidase AmiC (amiC).